An 88-amino-acid chain; its full sequence is Small ribosomal subunit protein bS20 (88 aa).

Positions 1–25 (MANSAQARKRARQAVAQNAHNSSLR) are disordered.

It belongs to the bacterial ribosomal protein bS20 family.

Its function is as follows. Binds directly to 16S ribosomal RNA. The chain is Small ribosomal subunit protein bS20 from Cupriavidus pinatubonensis (strain JMP 134 / LMG 1197) (Cupriavidus necator (strain JMP 134)).